A 253-amino-acid chain; its full sequence is Probable transcriptional regulatory protein TM_0466 (253 aa).

It belongs to the TACO1 family.

Its subcellular location is the cytoplasm. This is Probable transcriptional regulatory protein TM_0466 from Thermotoga maritima (strain ATCC 43589 / DSM 3109 / JCM 10099 / NBRC 100826 / MSB8).